Reading from the N-terminus, the 386-residue chain is Phosphate acyltransferase (386 aa).

The tract at residues 359 to 386 (PHRARQDELGENKVVGADQSMTAKATGT) is disordered. Positions 377-386 (QSMTAKATGT) are enriched in polar residues.

It belongs to the PlsX family. In terms of assembly, homodimer. Probably interacts with PlsY.

The protein resides in the cytoplasm. The catalysed reaction is a fatty acyl-[ACP] + phosphate = an acyl phosphate + holo-[ACP]. Its pathway is lipid metabolism; phospholipid metabolism. Catalyzes the reversible formation of acyl-phosphate (acyl-PO(4)) from acyl-[acyl-carrier-protein] (acyl-ACP). This enzyme utilizes acyl-ACP as fatty acyl donor, but not acyl-CoA. This chain is Phosphate acyltransferase, found in Beijerinckia indica subsp. indica (strain ATCC 9039 / DSM 1715 / NCIMB 8712).